A 306-amino-acid chain; its full sequence is Pantothenate kinase (306 aa).

91–98 is a binding site for ATP; that stretch reads GSVAVGKS.

The protein belongs to the prokaryotic pantothenate kinase family.

Its subcellular location is the cytoplasm. The enzyme catalyses (R)-pantothenate + ATP = (R)-4'-phosphopantothenate + ADP + H(+). It participates in cofactor biosynthesis; coenzyme A biosynthesis; CoA from (R)-pantothenate: step 1/5. This is Pantothenate kinase from Streptococcus gordonii (strain Challis / ATCC 35105 / BCRC 15272 / CH1 / DL1 / V288).